A 268-amino-acid polypeptide reads, in one-letter code: tRNA threonylcarbamoyladenosine dehydratase (268 aa).

Residues 237–257 (GFGAATMVTATFGFVAVSHAL) traverse the membrane as a helical segment.

This sequence belongs to the HesA/MoeB/ThiF family. As to quaternary structure, interacts with CsdE.

Its subcellular location is the membrane. Catalyzes the ATP-dependent dehydration of threonylcarbamoyladenosine at position 37 (t(6)A37) to form cyclic t(6)A37 (ct(6)A37) in tRNAs that read codons beginning with adenine. TcdA is also part of a sulfur transfer pathway; is able to accept sulfur from CsdA directly in vitro, but CsdE might act as the sulfur donor in vivo. In Escherichia coli (strain K12), this protein is tRNA threonylcarbamoyladenosine dehydratase (tcdA).